The chain runs to 89 residues: Small ribosomal subunit protein uS15 (89 aa).

It belongs to the universal ribosomal protein uS15 family. Part of the 30S ribosomal subunit. Forms a bridge to the 50S subunit in the 70S ribosome, contacting the 23S rRNA.

One of the primary rRNA binding proteins, it binds directly to 16S rRNA where it helps nucleate assembly of the platform of the 30S subunit by binding and bridging several RNA helices of the 16S rRNA. Functionally, forms an intersubunit bridge (bridge B4) with the 23S rRNA of the 50S subunit in the ribosome. In Acidithiobacillus ferrooxidans (strain ATCC 23270 / DSM 14882 / CIP 104768 / NCIMB 8455) (Ferrobacillus ferrooxidans (strain ATCC 23270)), this protein is Small ribosomal subunit protein uS15.